The chain runs to 143 residues: Transcriptional regulator MraZ (143 aa).

SpoVT-AbrB domains lie at 5 to 47 (EYQH…PQDE) and 76 to 119 (AAEL…STEK).

This sequence belongs to the MraZ family. Forms oligomers.

Its subcellular location is the cytoplasm. The protein localises to the nucleoid. The sequence is that of Transcriptional regulator MraZ from Syntrophomonas wolfei subsp. wolfei (strain DSM 2245B / Goettingen).